The chain runs to 77 residues: Teretoxin Tan15.2 (77 aa).

Residues 1–21 (MTRLTVVFLAILVLLPLATSN) form the signal peptide. The propeptide occupies 22 to 40 (SGADEAPASLSDLLHRTKR).

Post-translationally, contains 4 disulfide bonds. In terms of tissue distribution, expressed by the venom duct.

It localises to the secreted. This is Teretoxin Tan15.2 from Terebra anilis (Auger snail).